A 444-amino-acid chain; its full sequence is Enolase (444 aa).

Residues histidine 163 and glutamate 172 each contribute to the substrate site. The active-site Proton donor is the glutamate 215. Aspartate 250, glutamate 300, and aspartate 327 together coordinate Mg(2+). The substrate site is built by glutamate 300 and aspartate 327. The Proton acceptor role is filled by lysine 352. Residues 379–382 (SHRS) and lysine 403 each bind substrate.

Belongs to the enolase family. Homodimer. Mg(2+) is required as a cofactor.

The protein localises to the cytoplasm. The enzyme catalyses (2R)-2-phosphoglycerate = phosphoenolpyruvate + H2O. It functions in the pathway carbohydrate degradation; glycolysis; pyruvate from D-glyceraldehyde 3-phosphate: step 4/5. In Solanum lycopersicum (Tomato), this protein is Enolase (PGH1).